The primary structure comprises 591 residues: Aspartate--tRNA ligase (591 aa).

Glu172 is a binding site for L-aspartate. Residues Gln196–Lys199 form an aspartate region. Arg218 provides a ligand contact to L-aspartate. ATP contacts are provided by residues Arg218 to Glu220 and Gln227. His449 is an L-aspartate binding site. Glu483 is an ATP binding site. Arg490 contributes to the L-aspartate binding site. An ATP-binding site is contributed by Gly535–Arg538.

The protein belongs to the class-II aminoacyl-tRNA synthetase family. Type 1 subfamily. Homodimer.

It is found in the cytoplasm. The catalysed reaction is tRNA(Asp) + L-aspartate + ATP = L-aspartyl-tRNA(Asp) + AMP + diphosphate. Its function is as follows. Catalyzes the attachment of L-aspartate to tRNA(Asp) in a two-step reaction: L-aspartate is first activated by ATP to form Asp-AMP and then transferred to the acceptor end of tRNA(Asp). In Actinobacillus pleuropneumoniae serotype 5b (strain L20), this protein is Aspartate--tRNA ligase.